The primary structure comprises 58 residues: MQANSNKPNDNFYNSVDMQELSGETPVGWSATCLDQTICYYLNCDQESSAESDNSDSN.

It localises to the plastid. The protein resides in the chloroplast. This is an uncharacterized protein from Pyropia yezoensis (Susabi-nori).